The primary structure comprises 172 residues: Small ribosomal subunit protein uS5 (172 aa).

In terms of domain architecture, S5 DRBM spans 17-80 (LREKMISVNR…EQARRNMFKV (64 aa)).

The protein belongs to the universal ribosomal protein uS5 family. In terms of assembly, part of the 30S ribosomal subunit. Contacts proteins S4 and S8.

In terms of biological role, with S4 and S12 plays an important role in translational accuracy. Functionally, located at the back of the 30S subunit body where it stabilizes the conformation of the head with respect to the body. In Burkholderia lata (strain ATCC 17760 / DSM 23089 / LMG 22485 / NCIMB 9086 / R18194 / 383), this protein is Small ribosomal subunit protein uS5.